A 334-amino-acid chain; its full sequence is HTH-type transcriptional repressor PurR (334 aa).

The HTH lacI-type domain maps to 2-56; the sequence is ATIKDVARMAGVSTTTVSHVINKTRFVAEATQKKVLAAVDDLNYAPSAVARSLKC. The H-T-H motif DNA-binding region spans 4-23; sequence IKDVARMAGVSTTTVSHVIN. Residues 48 to 56 mediate DNA binding; sequence SAVARSLKC. Positions 73, 189, 191, 220, and 274 each coordinate hypoxanthine.

As to quaternary structure, homodimer.

It participates in purine metabolism; purine nucleotide biosynthesis [regulation]. Functionally, is the main repressor of the genes involved in the de novo synthesis of purine nucleotides, regulating purB, purC, purEK, purF, purHD, purL, purMN and guaBA expression. PurR is allosterically activated to bind its cognate DNA by binding the purine corepressors, hypoxanthine or guanine, thereby effecting transcription repression. The chain is HTH-type transcriptional repressor PurR from Photobacterium profundum (strain SS9).